A 209-amino-acid chain; its full sequence is Thymidylate kinase (209 aa).

G10–S17 is an ATP binding site.

It belongs to the thymidylate kinase family.

The catalysed reaction is dTMP + ATP = dTDP + ADP. In terms of biological role, phosphorylation of dTMP to form dTDP in both de novo and salvage pathways of dTTP synthesis. The chain is Thymidylate kinase from Francisella tularensis subsp. novicida (strain U112).